The chain runs to 577 residues: General transcription factor IIF subunit 1 (577 aa).

The disordered stretch occupies residues 1-36 (MSSASKSTPSAASGSSTSAAAAAAASVASGSASSSA). A phosphoserine mark is found at serine 183, serine 246, serine 250, and serine 252. The segment at 236–508 (KITDMDEWID…TSLPTSFSGG (273 aa)) is disordered. Residues 240–256 (MDEWIDSEDESDSEDEE) show a composition bias toward acidic residues. Residues 257-271 (DKKKKEQEDSDDGKA) show a composition bias toward basic and acidic residues. A compositionally biased stretch (basic residues) spans 272 to 285 (KGKGKKGADKKKKK). Residues 289–304 (DDEAFEESDDGDEEGR) are compositionally biased toward acidic residues. The span at 319–341 (PEAKVDKDMKGVAEEDALRKLLT) shows a compositional bias: basic and acidic residues. Threonine 341 is subject to Phosphothreonine. A phosphoserine mark is found at serine 342, serine 352, and serine 355. The span at 362 to 376 (GEKKKKDKGKDEVSK) shows a compositional bias: basic and acidic residues. A compositionally biased stretch (low complexity) spans 392 to 406 (SNGSGDSSTDFSSDS). Residues 423–437 (VVKDKDKEKEKEKES) show a composition bias toward basic and acidic residues. Over residues 438–456 (AASSKVIASSSNANKSRSA) the composition is skewed to low complexity. A phosphoserine mark is found at serine 453 and serine 455. At threonine 457 the chain carries Phosphothreonine. Composition is skewed to polar residues over residues 471-489 (SLPS…TSTP) and 496-506 (EISTSLPTSFS). Phosphoserine is present on residues serine 482 and serine 484. Phosphothreonine is present on threonine 488.

The protein belongs to the TFIIF alpha subunit family. Heterodimer of an alpha and a beta subunit. Phosphorylated on Ser and other residues by TAF1 and casein kinase II-like kinases.

It localises to the nucleus. In terms of biological role, TFIIF is a general transcription initiation factor that binds to RNA polymerase II and helps to recruit it to the initiation complex in collaboration with TFIIB. It promotes transcription elongation. The chain is General transcription factor IIF subunit 1 from Drosophila melanogaster (Fruit fly).